A 562-amino-acid polypeptide reads, in one-letter code: NAD-dependent malic enzyme (562 aa).

Tyr101 acts as the Proton donor in catalysis. Arg154 is a binding site for NAD(+). The Proton acceptor role is filled by Lys172. A divalent metal cation is bound by residues Glu243, Asp244, and Asp267. 2 residues coordinate NAD(+): Asp267 and Asn415.

Belongs to the malic enzymes family. Homotetramer. Requires Mg(2+) as cofactor. Mn(2+) is required as a cofactor.

The enzyme catalyses (S)-malate + NAD(+) = pyruvate + CO2 + NADH. It carries out the reaction oxaloacetate + H(+) = pyruvate + CO2. The protein is NAD-dependent malic enzyme of Colwellia psychrerythraea (strain 34H / ATCC BAA-681) (Vibrio psychroerythus).